We begin with the raw amino-acid sequence, 437 residues long: Nicotinate phosphoribosyltransferase (437 aa).

His231 carries the phosphohistidine; by autocatalysis modification.

Belongs to the NAPRTase family. In terms of processing, transiently phosphorylated on a His residue during the reaction cycle. Phosphorylation strongly increases the affinity for substrates and increases the rate of nicotinate D-ribonucleotide production. Dephosphorylation regenerates the low-affinity form of the enzyme, leading to product release.

The catalysed reaction is nicotinate + 5-phospho-alpha-D-ribose 1-diphosphate + ATP + H2O = nicotinate beta-D-ribonucleotide + ADP + phosphate + diphosphate. Its pathway is cofactor biosynthesis; NAD(+) biosynthesis; nicotinate D-ribonucleotide from nicotinate: step 1/1. Functionally, catalyzes the synthesis of beta-nicotinate D-ribonucleotide from nicotinate and 5-phospho-D-ribose 1-phosphate at the expense of ATP. This Vibrio vulnificus (strain CMCP6) protein is Nicotinate phosphoribosyltransferase.